An 89-amino-acid chain; its full sequence is Small ribosomal subunit protein uS15c (89 aa).

It belongs to the universal ribosomal protein uS15 family. Part of the 30S ribosomal subunit.

Its subcellular location is the plastid. The polypeptide is Small ribosomal subunit protein uS15c (rps15) (Aneura mirabilis (Parasitic liverwort)).